The sequence spans 504 residues: Histidine ammonia-lyase (504 aa).

Residues 142-144 (ASG) constitute a cross-link (5-imidazolinone (Ala-Gly)). Ser-143 carries the 2,3-didehydroalanine (Ser) modification.

The protein belongs to the PAL/histidase family. In terms of processing, contains an active site 4-methylidene-imidazol-5-one (MIO), which is formed autocatalytically by cyclization and dehydration of residues Ala-Ser-Gly.

It localises to the cytoplasm. It catalyses the reaction L-histidine = trans-urocanate + NH4(+). It participates in amino-acid degradation; L-histidine degradation into L-glutamate; N-formimidoyl-L-glutamate from L-histidine: step 1/3. The polypeptide is Histidine ammonia-lyase (Staphylococcus aureus (strain bovine RF122 / ET3-1)).